The sequence spans 136 residues: Aspartate 1-decarboxylase (136 aa).

S25 acts as the Schiff-base intermediate with substrate; via pyruvic acid in catalysis. Residue S25 is modified to Pyruvic acid (Ser). Substrate is bound at residue T57. Y58 functions as the Proton donor in the catalytic mechanism. 73-75 (GAA) contributes to the substrate binding site.

It belongs to the PanD family. Heterooctamer of four alpha and four beta subunits. Requires pyruvate as cofactor. In terms of processing, is synthesized initially as an inactive proenzyme, which is activated by self-cleavage at a specific serine bond to produce a beta-subunit with a hydroxyl group at its C-terminus and an alpha-subunit with a pyruvoyl group at its N-terminus.

The protein resides in the cytoplasm. It catalyses the reaction L-aspartate + H(+) = beta-alanine + CO2. It functions in the pathway cofactor biosynthesis; (R)-pantothenate biosynthesis; beta-alanine from L-aspartate: step 1/1. Its function is as follows. Catalyzes the pyruvoyl-dependent decarboxylation of aspartate to produce beta-alanine. This Acidothermus cellulolyticus (strain ATCC 43068 / DSM 8971 / 11B) protein is Aspartate 1-decarboxylase.